The sequence spans 344 residues: Ferrochelatase (344 aa).

Fe cation is bound by residues histidine 191 and glutamate 271.

It belongs to the ferrochelatase family.

It localises to the cytoplasm. It catalyses the reaction heme b + 2 H(+) = protoporphyrin IX + Fe(2+). It functions in the pathway porphyrin-containing compound metabolism; protoheme biosynthesis; protoheme from protoporphyrin-IX: step 1/1. Catalyzes the ferrous insertion into protoporphyrin IX. In Pelagibacter ubique (strain HTCC1062), this protein is Ferrochelatase.